The sequence spans 558 residues: 2-isopropylmalate synthase (558 aa).

Positions 31–305 constitute a Pyruvate carboxyltransferase domain; sequence PRWCSTDLRD…YPNLDFSDMR (275 aa). Mg(2+)-binding residues include Asp40, His244, His246, and Asn280. Positions 439-558 are regulatory domain; that stretch reads NPDDKGQMKL…NACHPLYKEA (120 aa).

This sequence belongs to the alpha-IPM synthase/homocitrate synthase family. LeuA type 2 subfamily. In terms of assembly, homodimer. It depends on Mg(2+) as a cofactor.

It localises to the cytoplasm. It carries out the reaction 3-methyl-2-oxobutanoate + acetyl-CoA + H2O = (2S)-2-isopropylmalate + CoA + H(+). It participates in amino-acid biosynthesis; L-leucine biosynthesis; L-leucine from 3-methyl-2-oxobutanoate: step 1/4. Its function is as follows. Catalyzes the condensation of the acetyl group of acetyl-CoA with 3-methyl-2-oxobutanoate (2-ketoisovalerate) to form 3-carboxy-3-hydroxy-4-methylpentanoate (2-isopropylmalate). In Marinomonas sp. (strain MWYL1), this protein is 2-isopropylmalate synthase.